A 2798-amino-acid chain; its full sequence is Nipped-B-like protein (2798 aa).

Polar residues-rich tracts occupy residues 128-173 (LSQN…QNSP) and 191-208 (HPSS…SVSS). The segment at 128–338 (LSQNSMHSSP…IKLGKDEKDQ (211 aa)) is disordered. 2 positions are modified to phosphoserine: Ser-150 and Ser-162. The segment covering 234–249 (HHADNPRHGSSDDYLH) has biased composition (basic and acidic residues). Phosphoserine is present on residues Ser-243, Ser-256, Ser-274, Ser-280, Ser-284, Ser-301, Ser-306, Ser-318, and Ser-350. A compositionally biased stretch (basic and acidic residues) spans 482 to 500 (RESAIERERFSKEVQDKDK). The interval 482–940 (RESAIERERF…NKAEFPSYLL (459 aa)) is disordered. A compositionally biased stretch (polar residues) spans 523–534 (PASQETGSTGNG). Basic and acidic residues-rich tracts occupy residues 562-572 (DSIKKPEETKQ), 593-625 (PENH…ESKP), 634-663 (KSNE…ESKQ), 672-685 (KQNE…KPND), and 694-899 (ENTK…DTNK). Phosphothreonine is present on residues Thr-713 and Thr-746. Phosphoserine is present on Ser-906. Over residues 908–933 (NSKDDKRTEGNRSKVDSNKAHTDNKA) the composition is skewed to basic and acidic residues. The short motif at 990 to 1003 (NKGAKPVVVLQKLS) is the PxVxL motif element. 2 disordered regions span residues 1011 to 1041 (IKDR…DQSV) and 1054 to 1186 (ESTM…TPEE). Lys-1076 is subject to N6-acetyllysine. Phosphoserine occurs at positions 1083, 1084, and 1090. Over residues 1083–1094 (SSDEDNDSDEAF) the composition is skewed to acidic residues. The segment covering 1103–1133 (KDDDKAWEYEERDRRSSGDHRRSGHSHDGRR) has biased composition (basic and acidic residues). A phosphoserine mark is found at Ser-1144, Ser-1146, and Ser-1148. Tyr-1153 is modified (phosphotyrosine). Residue Ser-1154 is modified to Phosphoserine. Residues 1165–1176 (KMKKKEKQKKRK) are compositionally biased toward basic residues. The residue at position 1183 (Thr-1183) is a Phosphothreonine. Ser-1191 is subject to Phosphoserine. Residues 1685–1705 (AMKSQKDEESSDATHHAKELE) show a composition bias toward basic and acidic residues. The interval 1685–1706 (AMKSQKDEESSDATHHAKELET) is disordered. 5 HEAT repeats span residues 1761–1799 (AQSF…VDPS), 1837–1875 (PQLA…EQPT), 1939–1978 (YDWF…HILK), 2221–2261 (VNLK…LKEM), and 2307–2345 (LIHP…KYAG). Positions 2467 to 2483 (VKDKRKERKTSPAKENE) are enriched in basic and acidic residues. Disordered stretches follow at residues 2467-2514 (VKDK…DDIN) and 2645-2690 (TSLL…DSTE). Phosphoserine occurs at positions 2487, 2503, 2505, 2507, 2509, 2646, and 2652. The span at 2504–2513 (ESDSDSEDDI) shows a compositional bias: acidic residues. The residue at position 2661 (Thr-2661) is a Phosphothreonine. Ser-2666 carries the post-translational modification Phosphoserine.

It belongs to the SCC2/Nipped-B family. As to quaternary structure, heterodimerizes with MAU2/SCC4 to form the cohesin loading complex. The NIPBL-MAU2 heterodimer interacts with the cohesin complex composed of SMC1A/B and SMC3 heterodimer, RAD21 and STAG1/SA1. NIPBL directly contacts all members of the complex, RAD21, SMC1A/B, SMC3 and STAG1. Interacts directly (via PxVxL motif) with CBX3 and CBX5. Interacts with ZNF609 (via N-terminus). Interacts with the multiprotein complex Integrator. Interacts with BRD4. As to expression, spermatocytes and oocytes (at protein level).

It is found in the nucleus. The protein localises to the chromosome. In terms of biological role, plays an important role in the loading of the cohesin complex on to DNA. Forms a heterodimeric complex (also known as cohesin loading complex) with MAU2/SCC4 which mediates the loading of the cohesin complex onto chromatin. Plays a role in cohesin loading at sites of DNA damage. Its recruitment to double-strand breaks (DSBs) sites occurs in a CBX3-, RNF8- and RNF168-dependent manner whereas its recruitment to UV irradiation-induced DNA damage sites occurs in a ATM-, ATR-, RNF8- and RNF168-dependent manner. Along with ZNF609, promotes cortical neuron migration during brain development by regulating the transcription of crucial genes in this process. Preferentially binds promoters containing paused RNA polymerase II. Up-regulates the expression of SEMA3A, NRP1, PLXND1 and GABBR2 genes, among others. This chain is Nipped-B-like protein (Nipbl), found in Mus musculus (Mouse).